Here is a 706-residue protein sequence, read N- to C-terminus: Solute carrier organic anion transporter family member 6C1 (706 aa).

The tract at residues 1 to 24 is disordered; it reads MAHVRNKKSDDKKAMVVAKEDTNK. Residues 1–94 lie on the Cytoplasmic side of the membrane; it reads MAHVRNKKSD…PFVQRFNNID (94 aa). Basic and acidic residues predominate over residues 7 to 24; it reads KKSDDKKAMVVAKEDTNK. A helical transmembrane segment spans residues 95–118; that stretch reads GFMTLYVAAVLIHGALFAVVDMTL. Over 119-130 the chain is Extracellular; that stretch reads NIYQVQFSLTRT. Residues 131–151 traverse the membrane as a helical segment; that stretch reads EWYLMDFSDYIASFVVAIIIA. The Cytoplasmic segment spans residues 152-159; sequence HFGSKGNR. A helical transmembrane segment spans residues 160–180; the sequence is TRWIAASCILMGLESMLFAFP. The Extracellular portion of the chain corresponds to 181–218; it reads FFTYEIIIPGRQSIELCMEENEKRNIICGNSVPNRSKC. Residue N214 is glycosylated (N-linked (GlcNAc...) asparagine). The helical transmembrane segment at 219 to 241 threads the bilayer; that stretch reads IYFHIAGQCIHGIAGMPIYILGI. Over 242 to 253 the chain is Cytoplasmic; sequence TFIFDHIPTSSC. Residues 254 to 277 form a helical membrane-spanning segment; that stretch reads GFYLAIGHSAYLIGYLLGMVGGLQ. Residues 278 to 301 lie on the Extracellular side of the membrane; sequence NFQPPPKEKTVEIEPAKVYQLLQS. Residues 302 to 324 form a helical membrane-spanning segment; that stretch reads GWWKTFLIIAAISFCVSFMMVCF. Residues 325 to 374 are Cytoplasmic-facing; that stretch reads PTSLPGAHKLRLAKRKEPPTIDRRLKDMKIQPHLKGFLHNIWHILKNPLM. The chain crosses the membrane as a helical span at residues 375–396; sequence LTQAICKVSEYLTFNTSLYFLP. The Extracellular segment spans residues 397–410; that stretch reads HHLQTQFLITPGIA. A helical transmembrane segment spans residues 411 to 432; that stretch reads SLLTGAFVLPGGIIGHFLGGLI. Residues 433–445 lie on the Cytoplasmic side of the membrane; sequence VDRLEMTNKNKLK. A helical membrane pass occupies residues 446–466; it reads FTLVTTVVSVGLFLLIFFVEC. Residues 467–565 are Extracellular-facing; it reads QTTTFAGINE…IAGTCDSDCL (99 aa). In terms of domain architecture, Kazal-like spans 485–540; that stretch reads GNLTADCNEYCDCTTSLYTSICGRDEKEYFSPCFAGCKATKVSQTEKTYYNCSCIK. N486 carries an N-linked (GlcNAc...) asparagine glycan. Cystine bridges form between C491–C521, C497–C517, and C506–C538. N-linked (GlcNAc...) asparagine glycosylation occurs at N535. A helical transmembrane segment spans residues 566–589; the sequence is KLPLFFAFYFSATVFSNMCSIPVI. Over 590-604 the chain is Cytoplasmic; the sequence is SIILQSVPANFTSLS. A helical transmembrane segment spans residues 605–624; that stretch reads LGVTYAIVKFVASVPAPLLF. Topologically, residues 625-652 are extracellular; sequence RLSSAIACIYWDNNRCGGKERCWIYNKN. Residues 653 to 675 form a helical membrane-spanning segment; it reads ILVYEFMGIWMSSQLIIVLLNIY. The Cytoplasmic segment spans residues 676 to 706; that stretch reads AIQIHDVVVHGEITESKTTVKDVKEQKERKA.

Belongs to the organo anion transporter (TC 2.A.60) family. Component of the CatSper complex or CatSpermasome composed of the core pore-forming members CATSPER1, CATSPER2, CATSPER3 and CATSPER4 as well as auxiliary members CATSPERB, CATSPERG2, CATSPERD, CATSPERE, CATSPERZ, C2CD6/CATSPERT, SLCO6C1, TMEM249, TMEM262 and EFCAB9. HSPA1 may be an additional auxiliary complex member. The core complex members CATSPER1, CATSPER2, CATSPER3 and CATSPER4 form a heterotetrameric channel. The auxiliary CATSPERB, CATSPERG2, CATSPERD and CATSPERE subunits form a pavilion-like structure over the pore which stabilizes the complex through interactions with CATSPER4, CATSPER3, CATSPER1 and CATSPER2 respectively. SLCO6C1 interacts with CATSPERE and TMEM262/CATSPERH interacts with CATSPERB, further stabilizing the complex. C2CD6/CATSPERT interacts at least with CATSPERD and is required for targeting the CatSper complex in the flagellar membrane.

It localises to the cell projection. Its subcellular location is the cilium. The protein localises to the flagellum membrane. Functionally, auxiliary component of the CatSper complex, a complex involved in sperm cell hyperactivation. This is Solute carrier organic anion transporter family member 6C1 from Mus musculus (Mouse).